The sequence spans 448 residues: MPVTEFSFKDPYTYQNGFDSYHESEAIEGALPVGHNSPQKAPYGLYAEKLSGTAFTAPRHENKQTWVYRILPAAAHENFVEEDASSYHTLSDAKKLQHIPNQLRWDPFDLDETVDWVHGLHLVAGSGDPTVKQGLGILLYAAGKDMGKEAFYSADGDFLIVAQHGVLDIQTELGRLLVRPNEICVIPRGVRYRVTLPDGPVRGYICELYQGHYQLPELGPIGSNGLANARDFQAPVAAFDDEEGPTEYRLYSKFNNHLFSARQDHTPFDIVAWHGNYYPYKYDLGRFNTMGSVSFDHPDPSIYTVLTGPSDHVGTAIADFVIFPPRWLVAEKTFRPPWYHRNTMSEFMGLITGNYDAKTGGGFQPAGASLHNIMSAHGPDMHAFEGASNADLKPTKIGDGSMAFMFESSLMVGVSEWGLKTCQKVQEEYNEHSWQPLKRHFKDPRKAQ.

3 residues coordinate Fe cation: His340, Glu346, and His377.

The protein belongs to the homogentisate dioxygenase family. The cofactor is Fe cation.

The catalysed reaction is homogentisate + O2 = 4-maleylacetoacetate + H(+). It functions in the pathway amino-acid degradation; L-phenylalanine degradation; acetoacetate and fumarate from L-phenylalanine: step 4/6. This is Homogentisate 1,2-dioxygenase (hmgA) from Emericella nidulans (strain FGSC A4 / ATCC 38163 / CBS 112.46 / NRRL 194 / M139) (Aspergillus nidulans).